The primary structure comprises 279 residues: 3-methyl-2-oxobutanoate hydroxymethyltransferase (279 aa).

Residues aspartate 43 and aspartate 82 each contribute to the Mg(2+) site. 3-methyl-2-oxobutanoate contacts are provided by residues 43 to 44 (DS), aspartate 82, and lysine 112. Glutamate 114 serves as a coordination point for Mg(2+). The active-site Proton acceptor is the glutamate 181.

This sequence belongs to the PanB family. In terms of assembly, homodecamer; pentamer of dimers. The cofactor is Mg(2+).

Its subcellular location is the cytoplasm. The catalysed reaction is 3-methyl-2-oxobutanoate + (6R)-5,10-methylene-5,6,7,8-tetrahydrofolate + H2O = 2-dehydropantoate + (6S)-5,6,7,8-tetrahydrofolate. It functions in the pathway cofactor biosynthesis; (R)-pantothenate biosynthesis; (R)-pantoate from 3-methyl-2-oxobutanoate: step 1/2. Its function is as follows. Catalyzes the reversible reaction in which hydroxymethyl group from 5,10-methylenetetrahydrofolate is transferred onto alpha-ketoisovalerate to form ketopantoate. The chain is 3-methyl-2-oxobutanoate hydroxymethyltransferase from Lysinibacillus sphaericus (strain C3-41).